Here is a 233-residue protein sequence, read N- to C-terminus: Large ribosomal subunit protein uL1 (233 aa).

This sequence belongs to the universal ribosomal protein uL1 family. In terms of assembly, part of the 50S ribosomal subunit.

Its function is as follows. Binds directly to 23S rRNA. The L1 stalk is quite mobile in the ribosome, and is involved in E site tRNA release. Functionally, protein L1 is also a translational repressor protein, it controls the translation of the L11 operon by binding to its mRNA. The polypeptide is Large ribosomal subunit protein uL1 (Rhizobium johnstonii (strain DSM 114642 / LMG 32736 / 3841) (Rhizobium leguminosarum bv. viciae)).